A 428-amino-acid chain; its full sequence is Enolase (428 aa).

(2R)-2-phosphoglycerate is bound at residue glutamine 163. Catalysis depends on glutamate 205, which acts as the Proton donor. The Mg(2+) site is built by aspartate 242, glutamate 286, and aspartate 313. 4 residues coordinate (2R)-2-phosphoglycerate: lysine 338, arginine 367, serine 368, and lysine 389. The active-site Proton acceptor is the lysine 338.

Belongs to the enolase family. Mg(2+) is required as a cofactor.

Its subcellular location is the cytoplasm. The protein localises to the secreted. It is found in the cell surface. It carries out the reaction (2R)-2-phosphoglycerate = phosphoenolpyruvate + H2O. The protein operates within carbohydrate degradation; glycolysis; pyruvate from D-glyceraldehyde 3-phosphate: step 4/5. Its function is as follows. Catalyzes the reversible conversion of 2-phosphoglycerate (2-PG) into phosphoenolpyruvate (PEP). It is essential for the degradation of carbohydrates via glycolysis. The protein is Enolase of Acidovorax ebreus (strain TPSY) (Diaphorobacter sp. (strain TPSY)).